The chain runs to 113 residues: Mitochondrial import inner membrane translocase subunit tim16 (113 aa).

The interval 56–108 (KILGLENVETVSKEDIDKKYNELLTINDPKDGGSEYLQIKISGAKHCLHSALK) is J-like.

The protein belongs to the TIM16/PAM16 family. As to quaternary structure, probable component of the PAM complex at least composed of a mitochondrial HSP70 protein, grepE, tim16 and tim14. Associates with the TIM23 complex.

Its subcellular location is the mitochondrion inner membrane. In terms of biological role, regulates ATP-dependent protein translocation into the mitochondrial matrix. This chain is Mitochondrial import inner membrane translocase subunit tim16 (timm16), found in Dictyostelium discoideum (Social amoeba).